A 326-amino-acid polypeptide reads, in one-letter code: L-threo-3-hydroxyaspartate ammonia-lyase (326 aa).

Lys53 is modified (N6-(pyridoxal phosphate)lysine). Pyridoxal 5'-phosphate is bound by residues Asn80, 179–183 (GGGGL), and Ser304.

This sequence belongs to the serine/threonine dehydratase family. As to quaternary structure, monomer. Pyridoxal 5'-phosphate serves as cofactor. Mn(2+) is required as a cofactor. The cofactor is Mg(2+). Requires Ca(2+) as cofactor.

The enzyme catalyses (3S)-3-hydroxy-L-aspartate = oxaloacetate + NH4(+). Is strongly inhibited by hydroxylamine and EDTA in vitro. Catalyzes the deamination of L-threo-3-hydroxyaspartate to oxaloacetate and ammonia. Shows a high specificity towards L-threo-3-hydroxyaspartate as other 3-hydroxyaminoacids, i.e. D,L-erythro- and D-threo-3-hydroxyaspartate, D-threonine, L-threonine, D,L-allothreonine, D-serine, and L-serine, are not substrates for this enzyme. Exhibits no detectable serine racemase activity. Is responsible for the 3-hydroxyaspartate resistance of S.cerevisiae, and thus may be involved in the detoxification of naturally occurring 3-hydroxyaspartate. The protein is L-threo-3-hydroxyaspartate ammonia-lyase (SRY1) of Saccharomyces cerevisiae (strain ATCC 204508 / S288c) (Baker's yeast).